A 425-amino-acid polypeptide reads, in one-letter code: Putative integrase/recombinase y4rF (425 aa).

One can recognise a Core-binding (CB) domain in the interval 123–210; the sequence is DPDALLLASF…HIRTFLRFLC (88 aa). The 186-residue stretch at 233-418 folds into the Tyr recombinase domain; sequence HLPPRLAWGD…AASQLAEVAL (186 aa). Catalysis depends on residues arginine 273, lysine 298, histidine 370, arginine 373, and histidine 396. The active-site O-(3'-phospho-DNA)-tyrosine intermediate is the tyrosine 405.

Belongs to the 'phage' integrase family.

The sequence is that of Putative integrase/recombinase y4rF from Sinorhizobium fredii (strain NBRC 101917 / NGR234).